The following is a 371-amino-acid chain: MTKSVGIIGWRGMVGSVLLKRMQEENDFSKIIPYFFSTSQSGQDGPIINNILSKNLKDAYNINLLQEMDIIITCQGSSYTEKIYPKLRNNNWQGYWIDAASTLRMEKDATIILDPVNLNVINNALDKGIKTFVGGNCTVSLMLMALGGLFVNNLIDWVFVSTYQAASGAGSRYVIELLKQMGSLYNVVSKDLLDKSYSVLDIEKKVTQESRSKNFPLENFSVPLATSLIPWIDVEMKNGQSREEWKGQAETNKILNLKKKVLIDGTCVRISSIRCHSQSFLIKLNKDISLENIKKIIVNHNQWVDVIPNNMQKTLCNLTPSAVTDTLNIPIGRLRKLNIDDRYLSAFTVGDQLLWGAAEPLRRMLNLLVNI.

NADP(+)-binding positions include Arg-11–Val-14, Thr-38–Ser-39, and Gln-75. Residue Arg-104 coordinates phosphate. Catalysis depends on Cys-137, which acts as the Acyl-thioester intermediate. Gln-164 lines the substrate pocket. Ser-167 to Gly-168 provides a ligand contact to NADP(+). Glu-243 lines the substrate pocket. A phosphate-binding site is contributed by Lys-246. Arg-269 lines the substrate pocket. His-276 functions as the Proton acceptor in the catalytic mechanism. Residue Gln-352 coordinates NADP(+).

This sequence belongs to the aspartate-semialdehyde dehydrogenase family. In terms of assembly, homodimer.

The catalysed reaction is L-aspartate 4-semialdehyde + phosphate + NADP(+) = 4-phospho-L-aspartate + NADPH + H(+). The protein operates within amino-acid biosynthesis; L-lysine biosynthesis via DAP pathway; (S)-tetrahydrodipicolinate from L-aspartate: step 2/4. Its pathway is amino-acid biosynthesis; L-methionine biosynthesis via de novo pathway; L-homoserine from L-aspartate: step 2/3. It participates in amino-acid biosynthesis; L-threonine biosynthesis; L-threonine from L-aspartate: step 2/5. Its function is as follows. Catalyzes the NADPH-dependent formation of L-aspartate-semialdehyde (L-ASA) by the reductive dephosphorylation of L-aspartyl-4-phosphate. In Buchnera aphidicola subsp. Schizaphis graminum (strain Sg), this protein is Aspartate-semialdehyde dehydrogenase.